The chain runs to 479 residues: Probable cytosol aminopeptidase (479 aa).

Residues lysine 247 and aspartate 252 each contribute to the Mn(2+) site. Lysine 259 is an active-site residue. 3 residues coordinate Mn(2+): aspartate 270, aspartate 329, and glutamate 331. Arginine 333 is a catalytic residue.

Belongs to the peptidase M17 family. It depends on Mn(2+) as a cofactor.

Its subcellular location is the cytoplasm. It catalyses the reaction Release of an N-terminal amino acid, Xaa-|-Yaa-, in which Xaa is preferably Leu, but may be other amino acids including Pro although not Arg or Lys, and Yaa may be Pro. Amino acid amides and methyl esters are also readily hydrolyzed, but rates on arylamides are exceedingly low.. The catalysed reaction is Release of an N-terminal amino acid, preferentially leucine, but not glutamic or aspartic acids.. Functionally, presumably involved in the processing and regular turnover of intracellular proteins. Catalyzes the removal of unsubstituted N-terminal amino acids from various peptides. In Vesicomyosocius okutanii subsp. Calyptogena okutanii (strain HA), this protein is Probable cytosol aminopeptidase.